We begin with the raw amino-acid sequence, 361 residues long: MTPTLRRKLEALAERREELQHLLSDPDVVGNNDTFRTLSRELSQLEPVAMALEEEARAKADLATAEALRNDPEMRELAEEEIAAAQARLEQLDAQLASLLVPRDPRDDGNLFLEVRAGTGGDEAAIFAGDLFRMYARYAERQGWKVEIESDSPGEHGGYKEVVARVVGRGAYSRLKFESGTHRVQRVPATESQGRIHTSAATVAIIPEADDVEEITINPADLKVDTFRSSGAGGQHVNKTESAIRITHVPSGVVVECQTERSQHANRDKAMKRLKAQLLDAERSKAAAAEAQTRKLQVGSGDRSQRIRTYSFPQGRITDHRVEGLTLYDLPNIIEGDLDALIGRLLHEHQADELARLSDSP.

N5-methylglutamine is present on glutamine 235.

This sequence belongs to the prokaryotic/mitochondrial release factor family. In terms of processing, methylated by PrmC. Methylation increases the termination efficiency of RF1.

The protein resides in the cytoplasm. In terms of biological role, peptide chain release factor 1 directs the termination of translation in response to the peptide chain termination codons UAG and UAA. This Xanthomonas euvesicatoria pv. vesicatoria (strain 85-10) (Xanthomonas campestris pv. vesicatoria) protein is Peptide chain release factor 1.